Consider the following 449-residue polypeptide: 3-phosphoshikimate 1-carboxyvinyltransferase (449 aa).

3-phosphoshikimate-binding residues include K28, S29, and R33. K28 is a phosphoenolpyruvate binding site. 2 residues coordinate phosphoenolpyruvate: G105 and R133. 3-phosphoshikimate is bound by residues S179, Q181, D332, and K359. Q181 serves as a coordination point for phosphoenolpyruvate. D332 (proton acceptor) is an active-site residue. 2 residues coordinate phosphoenolpyruvate: R363 and R406.

Belongs to the EPSP synthase family. In terms of assembly, monomer.

The protein localises to the cytoplasm. The catalysed reaction is 3-phosphoshikimate + phosphoenolpyruvate = 5-O-(1-carboxyvinyl)-3-phosphoshikimate + phosphate. It participates in metabolic intermediate biosynthesis; chorismate biosynthesis; chorismate from D-erythrose 4-phosphate and phosphoenolpyruvate: step 6/7. Its function is as follows. Catalyzes the transfer of the enolpyruvyl moiety of phosphoenolpyruvate (PEP) to the 5-hydroxyl of shikimate-3-phosphate (S3P) to produce enolpyruvyl shikimate-3-phosphate and inorganic phosphate. In Nitrobacter hamburgensis (strain DSM 10229 / NCIMB 13809 / X14), this protein is 3-phosphoshikimate 1-carboxyvinyltransferase.